Here is a 178-residue protein sequence, read N- to C-terminus: Cytochrome b6-f complex iron-sulfur subunit (178 aa).

Residues 20–42 form a helical membrane-spanning segment; that stretch reads LLTFGTATGVALGALYPVANYFM. The Rieske domain occupies 65-161; that stretch reads KTGWLASHQA…VDVDDDAVLV (97 aa). [2Fe-2S] cluster-binding residues include C107, H109, C125, and H128. C112 and C127 form a disulfide bridge.

This sequence belongs to the Rieske iron-sulfur protein family. As to quaternary structure, the 4 large subunits of the cytochrome b6-f complex are cytochrome b6, subunit IV (17 kDa polypeptide, PetD), cytochrome f and the Rieske protein, while the 4 small subunits are PetG, PetL, PetM and PetN. The complex functions as a dimer. Requires [2Fe-2S] cluster as cofactor.

The protein localises to the cellular thylakoid membrane. The catalysed reaction is 2 oxidized [plastocyanin] + a plastoquinol + 2 H(+)(in) = 2 reduced [plastocyanin] + a plastoquinone + 4 H(+)(out). In terms of biological role, component of the cytochrome b6-f complex, which mediates electron transfer between photosystem II (PSII) and photosystem I (PSI), cyclic electron flow around PSI, and state transitions. The chain is Cytochrome b6-f complex iron-sulfur subunit from Prochlorococcus marinus subsp. pastoris (strain CCMP1986 / NIES-2087 / MED4).